We begin with the raw amino-acid sequence, 243 residues long: Adenosylcobinamide-GDP ribazoletransferase (243 aa).

The next 5 helical transmembrane spans lie at 31-51 (LLFY…FSAL), 57-77 (LMLH…GLHL), 109-129 (IAVV…LALI), 135-155 (IGLL…FLGT), and 188-208 (VLLA…CFFW).

The protein belongs to the CobS family. Requires Mg(2+) as cofactor.

It localises to the cell inner membrane. It catalyses the reaction alpha-ribazole + adenosylcob(III)inamide-GDP = adenosylcob(III)alamin + GMP + H(+). The catalysed reaction is alpha-ribazole 5'-phosphate + adenosylcob(III)inamide-GDP = adenosylcob(III)alamin 5'-phosphate + GMP + H(+). It functions in the pathway cofactor biosynthesis; adenosylcobalamin biosynthesis; adenosylcobalamin from cob(II)yrinate a,c-diamide: step 7/7. Its function is as follows. Joins adenosylcobinamide-GDP and alpha-ribazole to generate adenosylcobalamin (Ado-cobalamin). Also synthesizes adenosylcobalamin 5'-phosphate from adenosylcobinamide-GDP and alpha-ribazole 5'-phosphate. This Pseudomonas savastanoi pv. phaseolicola (strain 1448A / Race 6) (Pseudomonas syringae pv. phaseolicola (strain 1448A / Race 6)) protein is Adenosylcobinamide-GDP ribazoletransferase.